The sequence spans 185 residues: ATP synthase subunit b 2 (185 aa).

The segment at 1–25 (MAESHGNAHGATAHTEADGGHKAPF) is disordered. A helical membrane pass occupies residues 34–56 (ASQLVSLTIAFVALYLISSRLAL).

It belongs to the ATPase B chain family. In terms of assembly, F-type ATPases have 2 components, F(1) - the catalytic core - and F(0) - the membrane proton channel. F(1) has five subunits: alpha(3), beta(3), gamma(1), delta(1), epsilon(1). F(0) has three main subunits: a(1), b(2) and c(10-14). The alpha and beta chains form an alternating ring which encloses part of the gamma chain. F(1) is attached to F(0) by a central stalk formed by the gamma and epsilon chains, while a peripheral stalk is formed by the delta and b chains.

Its subcellular location is the cell inner membrane. Its function is as follows. F(1)F(0) ATP synthase produces ATP from ADP in the presence of a proton or sodium gradient. F-type ATPases consist of two structural domains, F(1) containing the extramembraneous catalytic core and F(0) containing the membrane proton channel, linked together by a central stalk and a peripheral stalk. During catalysis, ATP synthesis in the catalytic domain of F(1) is coupled via a rotary mechanism of the central stalk subunits to proton translocation. Component of the F(0) channel, it forms part of the peripheral stalk, linking F(1) to F(0). The b'-subunit is a diverged and duplicated form of b found in plants and photosynthetic bacteria. This Nitrobacter winogradskyi (strain ATCC 25391 / DSM 10237 / CIP 104748 / NCIMB 11846 / Nb-255) protein is ATP synthase subunit b 2 (atpF2).